The primary structure comprises 546 residues: CTP synthase (546 aa).

The tract at residues 1 to 269 is amidoligase domain; that stretch reads MNSNTKIIFV…DAKLVELLNL (269 aa). S16 lines the CTP pocket. UTP is bound at residue S16. ATP contacts are provided by residues 17–22 and D74; that span reads SLGKGV. Mg(2+) contacts are provided by D74 and E143. CTP is bound by residues 150-152, 190-195, and K226; these read DIE and KTKPTQ. Residues 190–195 and K226 each bind UTP; that span reads KTKPTQ. The region spanning 294–546 is the Glutamine amidotransferase type-1 domain; that stretch reads TIAMVGKYVS…IQAAIENSNN (253 aa). Residue G356 participates in L-glutamine binding. C383 acts as the Nucleophile; for glutamine hydrolysis in catalysis. L-glutamine-binding positions include 384-387, E407, and R474; that span reads LGMQ. Active-site residues include H519 and E521.

Belongs to the CTP synthase family. Homotetramer.

It catalyses the reaction UTP + L-glutamine + ATP + H2O = CTP + L-glutamate + ADP + phosphate + 2 H(+). It carries out the reaction L-glutamine + H2O = L-glutamate + NH4(+). The enzyme catalyses UTP + NH4(+) + ATP = CTP + ADP + phosphate + 2 H(+). The protein operates within pyrimidine metabolism; CTP biosynthesis via de novo pathway; CTP from UDP: step 2/2. Its activity is regulated as follows. Allosterically activated by GTP, when glutamine is the substrate; GTP has no effect on the reaction when ammonia is the substrate. The allosteric effector GTP functions by stabilizing the protein conformation that binds the tetrahedral intermediate(s) formed during glutamine hydrolysis. Inhibited by the product CTP, via allosteric rather than competitive inhibition. Its function is as follows. Catalyzes the ATP-dependent amination of UTP to CTP with either L-glutamine or ammonia as the source of nitrogen. Regulates intracellular CTP levels through interactions with the four ribonucleotide triphosphates. The sequence is that of CTP synthase from Francisella tularensis subsp. mediasiatica (strain FSC147).